A 370-amino-acid chain; its full sequence is Flagellar P-ring protein (370 aa).

The N-terminal stretch at 1 to 24 (MTLSKWILSFGLSVCLIVSHPVSA) is a signal peptide.

The protein belongs to the FlgI family. In terms of assembly, the basal body constitutes a major portion of the flagellar organelle and consists of four rings (L,P,S, and M) mounted on a central rod.

The protein localises to the periplasm. Its subcellular location is the bacterial flagellum basal body. In terms of biological role, assembles around the rod to form the L-ring and probably protects the motor/basal body from shearing forces during rotation. In Nitrosomonas europaea (strain ATCC 19718 / CIP 103999 / KCTC 2705 / NBRC 14298), this protein is Flagellar P-ring protein.